Reading from the N-terminus, the 181-residue chain is Kappa-casein (181 aa).

The first 21 residues, Met1 to Ala21, serve as a signal peptide directing secretion. A Phosphothreonine modification is found at Thr123. Residues Thr134, Thr144, and Thr155 are each glycosylated (O-linked (GalNAc...) threonine). Residue Ser162 is modified to Phosphoserine; alternate. A glycan (O-linked (GalNAc...) serine; alternate) is linked at Ser162. Ser178 is modified (phosphoserine).

Belongs to the kappa-casein family. In terms of tissue distribution, mammary gland specific. Secreted in milk.

Its subcellular location is the secreted. Kappa-casein stabilizes micelle formation, preventing casein precipitation in milk. This chain is Kappa-casein (Csn3), found in Mus musculus (Mouse).